The chain runs to 757 residues: RNA-directed RNA polymerase catalytic subunit (757 aa).

Short sequence motifs (nuclear localization signal) lie at residues 187–195 (RKRRVRDNM) and 203–216 (RTIGKKKQKLNKRG). The promoter-binding site stretch occupies residues 249–256 (RGFVYFVE). The 198-residue stretch at 286–483 (VRKMMTNSQD…GINMSKKKSY (198 aa)) folds into the RdRp catalytic domain.

This sequence belongs to the influenza viruses polymerase PB1 family. As to quaternary structure, influenza RNA polymerase is composed of three subunits: PB1, PB2 and PA. Interacts (via N-terminus) with PA (via C-terminus). Interacts (via C-terminus) with PB2 (via N-terminus); this interaction is essential for transcription initiation. Interacts (via C-terminus) with human PKP2 (via N-terminus); the interaction competitively inhibits the interaction between the RNA polymerase subunits PB1 and PB2. In terms of processing, phosphorylated by host PRKCA.

The protein localises to the host nucleus. The protein resides in the host cytoplasm. The enzyme catalyses RNA(n) + a ribonucleoside 5'-triphosphate = RNA(n+1) + diphosphate. RNA-dependent RNA polymerase which is responsible for replication and transcription of virus RNA segments. The transcription of viral mRNAs occurs by a unique mechanism called cap-snatching. 5' methylated caps of cellular mRNAs are cleaved after 10-13 nucleotides by PA. In turn, these short capped RNAs are used as primers by PB1 for transcription of viral mRNAs. During virus replication, PB1 initiates RNA synthesis and copy vRNA into complementary RNA (cRNA) which in turn serves as a template for the production of more vRNAs. The protein is RNA-directed RNA polymerase catalytic subunit of Influenza A virus (strain A/Swine/Ontario/2/1981 H1N1).